We begin with the raw amino-acid sequence, 126 residues long: Autophagy-related protein 8-like protein DDB_G0290491 (126 aa).

Glycine 123 carries the Phosphatidylethanolamine amidated glycine lipid modification. Residues 124–126 constitute a propeptide, removed in mature form; the sequence is SDI.

This sequence belongs to the ATG8 family.

It localises to the membrane. This is Autophagy-related protein 8-like protein DDB_G0290491 from Dictyostelium discoideum (Social amoeba).